A 186-amino-acid chain; its full sequence is DNA damage up-regulated protein (186 aa).

Positions 147 to 166 (ATENGEGCRPARDPASSPSS) are disordered.

As to quaternary structure, interacts with DNA damage response proteins ATR, H2AX, PCNA, RAD18 and RAD51C. Forms a complex with H2AX and RAD18 following DDUP phosphorylation. Post-translationally, phosphorylated in an ATR-dependent manner; phosphorylation is required for interaction with H2AX and RAD18 and for DDUP-mediated DNA damage repair.

It localises to the nucleus. Its subcellular location is the chromosome. Its function is as follows. Promotes DNA damage repair through both homologous recombination repair (HRR) and post-replication repair (PRR) mechanisms. Enhances the retention of DNA damage response protein RAD18 at sites of DNA damage. This allows for HRR via association of RAD18 with RAD51C and for PRR via RAD18-mediated promotion of PCNA monoubiquitination. The protein is DNA damage up-regulated protein of Homo sapiens (Human).